The primary structure comprises 118 residues: Iron-sulfur cluster assembly protein CyaY (118 aa).

Belongs to the frataxin family.

Its function is as follows. Involved in iron-sulfur (Fe-S) cluster assembly. May act as a regulator of Fe-S biogenesis. This Buchnera aphidicola subsp. Baizongia pistaciae (strain Bp) protein is Iron-sulfur cluster assembly protein CyaY.